A 212-amino-acid chain; its full sequence is NEDD4 family-interacting protein 1 (212 aa).

A compositionally biased stretch (polar residues) spans 1-14 (MSEQSSSSRYQQLQ). The tract at residues 1-40 (MSEQSSSSRYQQLQNEEEPGENAQASADAPPPYSSIAGES) is disordered. Residues 1-107 (MSEQSSSSRY…ADQLRIGNDG (107 aa)) are Cytoplasmic-facing. 2 short sequence motifs (PPxY motif) span residues 30 to 33 (PPPY) and 55 to 58 (PPSY). A helical membrane pass occupies residues 108–128 (IFMLTFFMAFLFNWIGFFLSF). Residues 129–134 (CLTSSA) lie on the Extracellular side of the membrane. The helical transmembrane segment at 135–155 (AGRYGAISGFGLSLIKWILIV) threads the bilayer. Residues 156-163 (RFSTYFPG) lie on the Cytoplasmic side of the membrane. A helical transmembrane segment spans residues 164 to 184 (YFDGQYWLWWVFLVLGFLLFL). Residues 185–212 (RGFINYAKVRKMPDNFSTLPRTRVLFIY) are Extracellular-facing.

It is found in the golgi apparatus membrane. Its function is as follows. May play a role in Golgi structure maintenance. The sequence is that of NEDD4 family-interacting protein 1 (ndfip1) from Xenopus laevis (African clawed frog).